Here is a 412-residue protein sequence, read N- to C-terminus: ATP phosphoribosyltransferase regulatory subunit (412 aa).

The protein belongs to the class-II aminoacyl-tRNA synthetase family. HisZ subfamily. Heteromultimer composed of HisG and HisZ subunits.

Its subcellular location is the cytoplasm. Its pathway is amino-acid biosynthesis; L-histidine biosynthesis; L-histidine from 5-phospho-alpha-D-ribose 1-diphosphate: step 1/9. Functionally, required for the first step of histidine biosynthesis. May allow the feedback regulation of ATP phosphoribosyltransferase activity by histidine. The protein is ATP phosphoribosyltransferase regulatory subunit of Dehalococcoides mccartyi (strain ATCC BAA-2266 / KCTC 15142 / 195) (Dehalococcoides ethenogenes (strain 195)).